The chain runs to 31 residues: Cytochrome b6-f complex subunit 6 (31 aa).

The chain crosses the membrane as a helical span at residues 4–26 (LTSYFGFLLAALTITSALFIGLN).

It belongs to the PetL family. The 4 large subunits of the cytochrome b6-f complex are cytochrome b6, subunit IV (17 kDa polypeptide, PetD), cytochrome f and the Rieske protein, while the 4 small subunits are PetG, PetL, PetM and PetN. The complex functions as a dimer.

It is found in the plastid. It localises to the chloroplast thylakoid membrane. Its function is as follows. Component of the cytochrome b6-f complex, which mediates electron transfer between photosystem II (PSII) and photosystem I (PSI), cyclic electron flow around PSI, and state transitions. PetL is important for photoautotrophic growth as well as for electron transfer efficiency and stability of the cytochrome b6-f complex. The protein is Cytochrome b6-f complex subunit 6 of Amaranthus caudatus (Love-lies-bleeding).